A 200-amino-acid polypeptide reads, in one-letter code: High mobility group protein 1 homolog (200 aa).

2 consecutive DNA-binding regions (HMG box) follow at residues 11–81 (PRGR…QSYK) and 100–168 (PKRN…AEYK). Positions 64–86 (EKSMRDKVRYDREMQSYKPPKGE) are enriched in basic and acidic residues. 2 disordered regions span residues 64-103 (EKSM…PKRN) and 169-200 (AKAK…DDSD). A compositionally biased stretch (acidic residues) spans 190–200 (SSDDSSSDDSD).

This sequence belongs to the HMGB family.

The protein resides in the nucleus. The protein localises to the chromosome. Its function is as follows. Binds preferentially single-stranded DNA and unwinds double-stranded DNA. This chain is High mobility group protein 1 homolog (HMG1), found in Strongylocentrotus purpuratus (Purple sea urchin).